The primary structure comprises 600 residues: Cytidine monophosphate-N-acetylneuraminic acid hydroxylase (600 aa).

One can recognise a Rieske domain in the interval 9–107 (LSPVEVASLK…VEMDENNRLL (99 aa)). [2Fe-2S] cluster is bound by residues Cys49, His51, Cys70, and His73.

It belongs to the CMP-Neu5Ac hydroxylase family. It depends on [2Fe-2S] cluster as a cofactor.

It is found in the cytoplasm. It catalyses the reaction CMP-N-acetyl-beta-neuraminate + 2 Fe(II)-[cytochrome b5] + O2 + 2 H(+) = CMP-N-glycoloyl-beta-neuraminate + 2 Fe(III)-[cytochrome b5] + H2O. Its pathway is amino-sugar metabolism; N-acetylneuraminate metabolism. Sialic acids are components of carbohydrate chains of glycoconjugates and are involved in cell-cell recognition and cell-pathogen interactions. Catalyzes the conversion of CMP-N-acetylneuraminic acid (CMP-Neu5Ac) into its hydroxylated derivative CMP-N-glycolylneuraminic acid (CMP-Neu5Gc), a sialic acid abundantly expressed at the surface of many cells. This Gorilla gorilla gorilla (Western lowland gorilla) protein is Cytidine monophosphate-N-acetylneuraminic acid hydroxylase (CMAH).